The sequence spans 110 residues: UPF0122 protein BcerKBAB4_3669 (110 aa).

Belongs to the UPF0122 family.

Might take part in the signal recognition particle (SRP) pathway. This is inferred from the conservation of its genetic proximity to ftsY/ffh. May be a regulatory protein. The sequence is that of UPF0122 protein BcerKBAB4_3669 from Bacillus mycoides (strain KBAB4) (Bacillus weihenstephanensis).